A 360-amino-acid polypeptide reads, in one-letter code: Dehydrogenase mokE (360 aa).

Residue 50 to 53 participates in NADP(+) binding; it reads SDTK. Residue 134–141 participates in substrate binding; the sequence is AGISTAGL. NADP(+) contacts are provided by residues 173–176, 196–199, Y214, 261–262, and T279; these read STAT, SPHN, and LN. 281–285 serves as a coordination point for substrate; that stretch reads GPTIF. NADP(+) is bound at residue 350 to 351; it reads LS.

Belongs to the zinc-containing alcohol dehydrogenase family. As to quaternary structure, monomer.

It functions in the pathway polyketide biosynthesis; lovastatin biosynthesis. In terms of biological role, dehydrogenase; part of the gene cluster that mediates the biosynthesis of monakolin K, also known as lovastatin, and which acts as a potent competitive inhibitor of HMG-CoA reductase. Monakolin K biosynthesis is performed in two stages. The first stage is catalyzed by the nonaketide synthase mokA, which belongs to type I polyketide synthases and catalyzes the iterative nine-step formation of the polyketide. This PKS stage is completed by the action of dehydrogenase mokE, which catalyzes the NADPH-dependent reduction of the unsaturated tetra-, penta- and heptaketide intermediates that arise during the mokA-mediated biosynthesis of the nonaketide chain and leads to dihydromonacolin L. Covalently bound dihydromonacolin L is released from mokA by the mokD esterase. Conversion of dihydromonacolin L into monacolin L and then monacolin J is subsequently performed with the participation of molecular oxygen and P450 monoogygenase mokC. Finally, mokF performs the conversion of monacoline J to monacoline K through the addition of the side-chain diketide moiety (2R)-2-methylbutanoate produced by the diketide synthase mokB. This is Dehydrogenase mokE from Monascus pilosus (Red mold).